The following is a 302-amino-acid chain: Putative fructose-bisphosphate aldolase (302 aa).

Residue aspartate 86 is the Proton donor of the active site. Residues histidine 87, aspartate 116, glutamate 146, and histidine 192 each coordinate Zn(2+). Residue glycine 193 coordinates dihydroxyacetone phosphate. Histidine 223 is a Zn(2+) binding site. Dihydroxyacetone phosphate-binding positions include 224-226 (GAD) and 245-248 (NVNR).

The protein belongs to the class II fructose-bisphosphate aldolase family. As to quaternary structure, homodimer. The cofactor is Zn(2+).

It catalyses the reaction beta-D-fructose 1,6-bisphosphate = D-glyceraldehyde 3-phosphate + dihydroxyacetone phosphate. The protein operates within carbohydrate degradation; glycolysis; D-glyceraldehyde 3-phosphate and glycerone phosphate from D-glucose: step 4/4. In terms of biological role, catalyzes the aldol condensation of dihydroxyacetone phosphate (DHAP or glycerone-phosphate) with glyceraldehyde 3-phosphate (G3P) to form fructose 1,6-bisphosphate (FBP) in gluconeogenesis and the reverse reaction in glycolysis. The chain is Putative fructose-bisphosphate aldolase from Coccidioides immitis (strain RS) (Valley fever fungus).